The following is an 831-amino-acid chain: Replication restart protein PriA (831 aa).

The region spanning valine 304–histidine 471 is the Helicase ATP-binding domain. An ATP-binding site is contributed by glycine 317–threonine 324. The DEAH box signature appears at aspartate 413–histidine 416. Zn(2+) is bound by residues cysteine 537, cysteine 540, cysteine 546, cysteine 549, cysteine 568, cysteine 571, cysteine 581, and cysteine 584. One can recognise a Helicase C-terminal domain in the interval glutamate 575–tyrosine 735.

This sequence belongs to the helicase family. PriA subfamily. Component of the replication restart primosome. Zn(2+) serves as cofactor.

It carries out the reaction Couples ATP hydrolysis with the unwinding of duplex DNA by translocating in the 3'-5' direction.. It catalyses the reaction ATP + H2O = ADP + phosphate + H(+). In terms of biological role, initiates the restart of stalled replication forks, which reloads the replicative helicase on sites other than the origin of replication. Recognizes and binds to abandoned replication forks and remodels them to uncover a helicase loading site. Promotes assembly of the primosome at these replication forks. In Synechocystis sp. (strain ATCC 27184 / PCC 6803 / Kazusa), this protein is Replication restart protein PriA.